Reading from the N-terminus, the 238-residue chain is Sugar fermentation stimulation protein homolog (238 aa).

It belongs to the SfsA family.

The chain is Sugar fermentation stimulation protein homolog from Actinobacillus succinogenes (strain ATCC 55618 / DSM 22257 / CCUG 43843 / 130Z).